Consider the following 507-residue polypeptide: ATP synthase subunit alpha (507 aa).

169-176 (GDRQTGKT) lines the ATP pocket.

It belongs to the ATPase alpha/beta chains family. In terms of assembly, F-type ATPases have 2 components, CF(1) - the catalytic core - and CF(0) - the membrane proton channel. CF(1) has five subunits: alpha(3), beta(3), gamma(1), delta(1), epsilon(1). CF(0) has three main subunits: a(1), b(2) and c(9-12). The alpha and beta chains form an alternating ring which encloses part of the gamma chain. CF(1) is attached to CF(0) by a central stalk formed by the gamma and epsilon chains, while a peripheral stalk is formed by the delta and b chains.

It is found in the cell inner membrane. It catalyses the reaction ATP + H2O + 4 H(+)(in) = ADP + phosphate + 5 H(+)(out). In terms of biological role, produces ATP from ADP in the presence of a proton gradient across the membrane. The alpha chain is a regulatory subunit. The chain is ATP synthase subunit alpha from Magnetococcus marinus (strain ATCC BAA-1437 / JCM 17883 / MC-1).